A 291-amino-acid polypeptide reads, in one-letter code: ATP synthase gamma chain (291 aa).

It belongs to the ATPase gamma chain family. F-type ATPases have 2 components, CF(1) - the catalytic core - and CF(0) - the membrane proton channel. CF(1) has five subunits: alpha(3), beta(3), gamma(1), delta(1), epsilon(1). CF(0) has three main subunits: a, b and c.

The protein resides in the cell inner membrane. In terms of biological role, produces ATP from ADP in the presence of a proton gradient across the membrane. The gamma chain is believed to be important in regulating ATPase activity and the flow of protons through the CF(0) complex. The protein is ATP synthase gamma chain of Nitratidesulfovibrio vulgaris (strain ATCC 29579 / DSM 644 / CCUG 34227 / NCIMB 8303 / VKM B-1760 / Hildenborough) (Desulfovibrio vulgaris).